Here is a 543-residue protein sequence, read N- to C-terminus: Probable ubiquitin-conjugating enzyme E2 26 (543 aa).

The segment at 1 to 21 (MEPDVVEIPPPPLIASGSRTR) is disordered. The UBC core domain maps to 271 to 431 (NWVKKVQADW…VFLLSLKTMV (161 aa)). The Glycyl thioester intermediate role is filled by cysteine 357. The disordered stretch occupies residues 514–543 (LAEKPEPPMSNANTENQSKKKTRKRSRSSR). A compositionally biased stretch (basic residues) spans 532–543 (KKKTRKRSRSSR).

This sequence belongs to the ubiquitin-conjugating enzyme family.

It catalyses the reaction S-ubiquitinyl-[E1 ubiquitin-activating enzyme]-L-cysteine + [E2 ubiquitin-conjugating enzyme]-L-cysteine = [E1 ubiquitin-activating enzyme]-L-cysteine + S-ubiquitinyl-[E2 ubiquitin-conjugating enzyme]-L-cysteine.. Its pathway is protein modification; protein ubiquitination. Accepts the ubiquitin from the E1 complex and catalyzes its covalent attachment to other proteins. The sequence is that of Probable ubiquitin-conjugating enzyme E2 26 (UBC26) from Arabidopsis thaliana (Mouse-ear cress).